Consider the following 1227-residue polypeptide: ATP-dependent helicase/nuclease subunit A (1227 aa).

One can recognise a UvrD-like helicase ATP-binding domain in the interval 37 to 503 (QKRTAEQIEA…ILLKENFRSQ (467 aa)). 58 to 65 (ASAGSGKT) is a binding site for ATP. The 285-residue stretch at 532 to 816 (SLVAGSPGQK…QLMTIHKSKG (285 aa)) folds into the UvrD-like helicase C-terminal domain.

The protein belongs to the helicase family. AddA subfamily. As to quaternary structure, heterodimer of AddA and AddB/RexB. It depends on Mg(2+) as a cofactor.

It catalyses the reaction Couples ATP hydrolysis with the unwinding of duplex DNA by translocating in the 3'-5' direction.. The enzyme catalyses ATP + H2O = ADP + phosphate + H(+). The heterodimer acts as both an ATP-dependent DNA helicase and an ATP-dependent, dual-direction single-stranded exonuclease. Recognizes the chi site generating a DNA molecule suitable for the initiation of homologous recombination. The AddA nuclease domain is required for chi fragment generation; this subunit has the helicase and 3' -&gt; 5' nuclease activities. The sequence is that of ATP-dependent helicase/nuclease subunit A from Streptococcus suis (strain 98HAH33).